The primary structure comprises 105 residues: Large ribosomal subunit protein uL24 (105 aa).

Belongs to the universal ribosomal protein uL24 family. As to quaternary structure, part of the 50S ribosomal subunit.

In terms of biological role, one of two assembly initiator proteins, it binds directly to the 5'-end of the 23S rRNA, where it nucleates assembly of the 50S subunit. Its function is as follows. One of the proteins that surrounds the polypeptide exit tunnel on the outside of the subunit. This is Large ribosomal subunit protein uL24 from Psychrobacter sp. (strain PRwf-1).